The chain runs to 740 residues: Platelet endothelial cell adhesion molecule (740 aa).

The signal sequence occupies residues 1 to 27 (MRLRWTQGGNMWLGVLLTLQLCSSLEG). Residues 28–602 (QENSFTINSI…VRVYLAPWKK (575 aa)) lie on the Extracellular side of the membrane. 3 consecutive Ig-like C2-type domains span residues 35–126 (NSIH…YKVV), 145–223 (GGVV…DSVR), and 236–315 (PKFH…SKVS). N-linked (GlcNAc...) asparagine glycans are attached at residues N52 and N84. 3 disulfide bridges follow: C57–C109, C152–C206, and C256–C304. 8 N-linked (GlcNAc...) asparagine glycosylation sites follow: N284, N301, N320, N357, N372, N436, N456, and N552. Ig-like C2-type domains follow at residues 328 to 404 (PKLK…VQIA), 425 to 494 (GQTI…KVLR), and 500 to 592 (PVEE…NILA). 3 disulfide bridges follow: C347–C387, C432–C477, and C524–C573. Residues 603–621 (GLIAVVVIAVIIAVLLLGA) form a helical membrane-spanning segment. Residues 622–740 (RFYFLKKSKA…SRTEGSLDGT (119 aa)) are Cytoplasmic-facing. Short sequence motifs (ITIM motif) lie at residues 690 to 695 (VEYTEV) and 713 to 718 (TVYSEI). A phosphotyrosine; by FER mark is found at Y692 and Y715. The tract at residues 697 to 740 (VTSPEPHRGLGTKGTETVYSEIRKADPDLVENRYSRTEGSLDGT) is disordered. The tract at residues 711–731 (TETVYSEIRKADPDLVENRYS) is membrane-bound segment which detaches upon phosphorylation. Positions 717 to 732 (EIRKADPDLVENRYSR) are enriched in basic and acidic residues. Residues 723–740 (PDLVENRYSRTEGSLDGT) form a may play a role in cytoprotective signaling region. Residues S731 and S736 each carry the phosphoserine modification.

As to quaternary structure, trans-homodimer (via Ig-like C2-type 1 and Ig-like C2-type 2 domains); trans-homodimerization is required for cell-cell interaction. Forms a complex with BDKRB2 and GNAQ. Interacts with BDKRB2 and GNAQ. Interacts with PTPN11; Tyr-715 is critical for PTPN11 recruitment. Interacts with FER. Interacts with CD177; the interaction is Ca(2+)-dependent; the interaction is direct. Phosphorylated on Ser and Tyr residues by src kinases after cellular activation. Upon activation, phosphorylated on Ser-731 which probably initiates the dissociation of the membrane-interaction segment (residues 711-731) from the cell membrane allowing the sequential phosphorylation of Tyr-715 and Tyr-692. Constitutively phosphorylated on Ser-736 in resting platelets. Phosphorylated on tyrosine residues by FER and FES in response to FCER1 activation. In endothelial cells Fyn mediates mechanical-force (stretch or pull) induced tyrosine phosphorylation. In terms of processing, palmitoylation by ZDHHC21 is necessary for cell surface expression in endothelial cells and enrichment in membrane rafts.

The protein resides in the cell membrane. It localises to the membrane raft. The protein localises to the cell junction. In terms of biological role, cell adhesion molecule which is required for leukocyte transendothelial migration (TEM) under most inflammatory conditions. Tyr-692 plays a critical role in TEM and is required for efficient trafficking of PECAM1 to and from the lateral border recycling compartment (LBRC) and is also essential for the LBRC membrane to be targeted around migrating leukocytes. Trans-homophilic interaction may play a role in endothelial cell-cell adhesion via cell junctions. Heterophilic interaction with CD177 plays a role in transendothelial migration of neutrophils. Homophilic ligation of PECAM1 prevents macrophage-mediated phagocytosis of neighboring viable leukocytes by transmitting a detachment signal. Promotes macrophage-mediated phagocytosis of apoptotic leukocytes by tethering them to the phagocytic cells; PECAM1-mediated detachment signal appears to be disabled in apoptotic leukocytes. Modulates bradykinin receptor BDKRB2 activation. Regulates bradykinin- and hyperosmotic shock-induced ERK1/2 activation in endothelial cells. Induces susceptibility to atherosclerosis. The chain is Platelet endothelial cell adhesion molecule (PECAM1) from Sus scrofa (Pig).